The sequence spans 384 residues: S-adenosylmethionine synthase (384 aa).

His-15 provides a ligand contact to ATP. Asp-17 is a binding site for Mg(2+). Position 43 (Glu-43) interacts with K(+). The L-methionine site is built by Glu-56 and Gln-99. The flexible loop stretch occupies residues 99 to 109 (QSPDINQGVDR). Residues 164–166 (DAK), 231–232 (RF), Asp-240, 246–247 (RK), Ala-263, and Lys-267 each bind ATP. Position 240 (Asp-240) interacts with L-methionine. Lys-271 serves as a coordination point for L-methionine.

It belongs to the AdoMet synthase family. As to quaternary structure, homotetramer; dimer of dimers. Mg(2+) is required as a cofactor. The cofactor is K(+).

It is found in the cytoplasm. It catalyses the reaction L-methionine + ATP + H2O = S-adenosyl-L-methionine + phosphate + diphosphate. It functions in the pathway amino-acid biosynthesis; S-adenosyl-L-methionine biosynthesis; S-adenosyl-L-methionine from L-methionine: step 1/1. In terms of biological role, catalyzes the formation of S-adenosylmethionine (AdoMet) from methionine and ATP. The overall synthetic reaction is composed of two sequential steps, AdoMet formation and the subsequent tripolyphosphate hydrolysis which occurs prior to release of AdoMet from the enzyme. The sequence is that of S-adenosylmethionine synthase from Shewanella woodyi (strain ATCC 51908 / MS32).